Here is a 268-residue protein sequence, read N- to C-terminus: 3-methyl-2-oxobutanoate hydroxymethyltransferase (268 aa).

Mg(2+) is bound by residues D41 and D80. 3-methyl-2-oxobutanoate contacts are provided by residues 41-42, D80, and K110; that span reads DS. E112 contacts Mg(2+). E178 acts as the Proton acceptor in catalysis.

This sequence belongs to the PanB family. In terms of assembly, homodecamer; pentamer of dimers. It depends on Mg(2+) as a cofactor.

The protein localises to the cytoplasm. The catalysed reaction is 3-methyl-2-oxobutanoate + (6R)-5,10-methylene-5,6,7,8-tetrahydrofolate + H2O = 2-dehydropantoate + (6S)-5,6,7,8-tetrahydrofolate. Its pathway is cofactor biosynthesis; coenzyme A biosynthesis. In terms of biological role, catalyzes the reversible reaction in which hydroxymethyl group from 5,10-methylenetetrahydrofolate is transferred onto alpha-ketoisovalerate to form ketopantoate. This Natronomonas pharaonis (strain ATCC 35678 / DSM 2160 / CIP 103997 / JCM 8858 / NBRC 14720 / NCIMB 2260 / Gabara) (Halobacterium pharaonis) protein is 3-methyl-2-oxobutanoate hydroxymethyltransferase.